Reading from the N-terminus, the 219-residue chain is Glutathione S-transferase-like protein LUC7 (219 aa).

Residues 3–84 (PFGRLYSFMP…YLAQSGPYSE (82 aa)) enclose the GST N-terminal domain. Residues 90-219 (DAATSAKIRQ…NLIDVKRVHE (130 aa)) enclose the GST C-terminal domain.

It belongs to the GST superfamily.

Functionally, glutathione S-transferase-like protein; part of the gene cluster that mediates the biosynthesis of the mycotoxin lucilactaene and the lucilactaene-related compound NG-391 that act as cell cycle inhibitors with potent growth inhibitory activity against malarial parasites, moderate growth inhibitory activity against cancer cells, and no activity against bacteria and fungi. Within the cluster, LUC7 and LUC8 encode proteins which are not commonly involved in the biosynthesis of secondary metabolites and are not essential for lucilactaene biosynthesis. This is Glutathione S-transferase-like protein LUC7 from Fusarium sp.